The following is a 122-amino-acid chain: Heat-labile enterotoxin IIB, B chain (122 aa).

The signal sequence occupies residues 1 to 23 (MSFKKIIKAFVIMAALVSVQAHA). A disulfide bridge connects residues C33 and C104.

As to quaternary structure, heterohexamer of one A chain and of five B chains.

The biological activity of the toxin is produced by the A chain, which activates intracellular adenyl cyclase. This is Heat-labile enterotoxin IIB, B chain from Escherichia coli.